The following is a 371-amino-acid chain: S-adenosylmethionine:tRNA ribosyltransferase-isomerase (371 aa).

This sequence belongs to the QueA family. In terms of assembly, monomer.

The protein localises to the cytoplasm. It carries out the reaction 7-aminomethyl-7-carbaguanosine(34) in tRNA + S-adenosyl-L-methionine = epoxyqueuosine(34) in tRNA + adenine + L-methionine + 2 H(+). It participates in tRNA modification; tRNA-queuosine biosynthesis. Transfers and isomerizes the ribose moiety from AdoMet to the 7-aminomethyl group of 7-deazaguanine (preQ1-tRNA) to give epoxyqueuosine (oQ-tRNA). The protein is S-adenosylmethionine:tRNA ribosyltransferase-isomerase of Nitratidesulfovibrio vulgaris (strain ATCC 29579 / DSM 644 / CCUG 34227 / NCIMB 8303 / VKM B-1760 / Hildenborough) (Desulfovibrio vulgaris).